Reading from the N-terminus, the 969-residue chain is RNA polymerase-associated protein RapA (969 aa).

A Helicase ATP-binding domain is found at 164 to 334 (EVGRRHAPRV…FARLRLLDSD (171 aa)). 177-184 (DEVGLGKT) provides a ligand contact to ATP. The DEAH box signature appears at 280–283 (DEAH). The Helicase C-terminal domain maps to 492–668 (RVNWLLEKLK…GSNEALNDVI (177 aa)).

It belongs to the SNF2/RAD54 helicase family. RapA subfamily. Interacts with the RNAP. Has a higher affinity for the core RNAP than for the holoenzyme. Its ATPase activity is stimulated by binding to RNAP.

In terms of biological role, transcription regulator that activates transcription by stimulating RNA polymerase (RNAP) recycling in case of stress conditions such as supercoiled DNA or high salt concentrations. Probably acts by releasing the RNAP, when it is trapped or immobilized on tightly supercoiled DNA. Does not activate transcription on linear DNA. Probably not involved in DNA repair. This Vibrio vulnificus (strain YJ016) protein is RNA polymerase-associated protein RapA.